Consider the following 158-residue polypeptide: Ribosomal RNA large subunit methyltransferase H (158 aa).

S-adenosyl-L-methionine-binding positions include Leu76, Gly107, and 126 to 131 (LSGLTM).

This sequence belongs to the RNA methyltransferase RlmH family. As to quaternary structure, homodimer.

It is found in the cytoplasm. It carries out the reaction pseudouridine(1915) in 23S rRNA + S-adenosyl-L-methionine = N(3)-methylpseudouridine(1915) in 23S rRNA + S-adenosyl-L-homocysteine + H(+). In terms of biological role, specifically methylates the pseudouridine at position 1915 (m3Psi1915) in 23S rRNA. This Teredinibacter turnerae (strain ATCC 39867 / T7901) protein is Ribosomal RNA large subunit methyltransferase H.